A 309-amino-acid chain; its full sequence is Manganese-dependent inorganic pyrophosphatase (309 aa).

Mn(2+) is bound by residues H9, D13, D15, D75, H97, and D149.

As to quaternary structure, homodimer. It depends on Mn(2+) as a cofactor.

The protein localises to the cytoplasm. The enzyme catalyses diphosphate + H2O = 2 phosphate + H(+). This chain is Manganese-dependent inorganic pyrophosphatase (ppaC), found in Bacillus subtilis (strain 168).